A 155-amino-acid polypeptide reads, in one-letter code: Protein-export protein SecB (155 aa).

This sequence belongs to the SecB family. Homotetramer, a dimer of dimers. One homotetramer interacts with 1 SecA dimer.

The protein localises to the cytoplasm. One of the proteins required for the normal export of preproteins out of the cell cytoplasm. It is a molecular chaperone that binds to a subset of precursor proteins, maintaining them in a translocation-competent state. It also specifically binds to its receptor SecA. The protein is Protein-export protein SecB of Escherichia fergusonii (strain ATCC 35469 / DSM 13698 / CCUG 18766 / IAM 14443 / JCM 21226 / LMG 7866 / NBRC 102419 / NCTC 12128 / CDC 0568-73).